The sequence spans 134 residues: Profilin-2 (134 aa).

A disulfide bond links C13 and C118. The Involved in PIP2 interaction signature appears at A84–T100. A Phosphothreonine modification is found at T114.

This sequence belongs to the profilin family. Occurs in many kinds of cells as a complex with monomeric actin in a 1:1 ratio. Phosphorylated by MAP kinases.

The protein localises to the cytoplasm. It localises to the cytoskeleton. Binds to actin and affects the structure of the cytoskeleton. At high concentrations, profilin prevents the polymerization of actin, whereas it enhances it at low concentrations. This is Profilin-2 from Olea europaea (Common olive).